Reading from the N-terminus, the 113-residue chain is Dolichyl-diphosphooligosaccharide--protein glycosyltransferase subunit DAD1 (113 aa).

An N-acetylserine modification is found at S2. Residues 2 to 30 are Cytoplasmic-facing; that stretch reads SASVVSVISRFLEEYLSSTPQRLKLLDAY. The helical transmembrane segment at 31–51 threads the bilayer; it reads LLYILLTGALQFGYCLLVGTF. Residue P52 is a topological domain, lumenal. The chain crosses the membrane as a helical span at residues 53–73; sequence FNSFLSGFISCVGSFILAVRL. Topologically, residues 74 to 92 are cytoplasmic; it reads RIQINPQNKADFQGISPER. The chain crosses the membrane as a helical span at residues 93–113; the sequence is AFADFLFASTILHLVVMNFVG.

This sequence belongs to the DAD/OST2 family. Component of the oligosaccharyltransferase (OST) complex. OST exists in two different complex forms which contain common core subunits RPN1, RPN2, OST48, OST4, DAD1 and TMEM258, either STT3A or STT3B as catalytic subunits, and form-specific accessory subunits. STT3A complex assembly occurs through the formation of 3 subcomplexes. Subcomplex 1 contains RPN1 and TMEM258, subcomplex 2 contains the STT3A-specific subunits STT3A, DC2/OSTC, and KCP2 as well as the core subunit OST4, and subcomplex 3 contains RPN2, DAD1, and OST48. The STT3A complex can form stable complexes with the Sec61 complex or with both the Sec61 and TRAP complexes.

Its subcellular location is the endoplasmic reticulum membrane. The protein operates within protein modification; protein glycosylation. In terms of biological role, subunit of the oligosaccharyl transferase (OST) complex that catalyzes the initial transfer of a defined glycan (Glc(3)Man(9)GlcNAc(2) in eukaryotes) from the lipid carrier dolichol-pyrophosphate to an asparagine residue within an Asn-X-Ser/Thr consensus motif in nascent polypeptide chains, the first step in protein N-glycosylation. N-glycosylation occurs cotranslationally and the complex associates with the Sec61 complex at the channel-forming translocon complex that mediates protein translocation across the endoplasmic reticulum (ER). All subunits are required for a maximal enzyme activity. In Pongo abelii (Sumatran orangutan), this protein is Dolichyl-diphosphooligosaccharide--protein glycosyltransferase subunit DAD1.